We begin with the raw amino-acid sequence, 148 residues long: Cytochrome c oxidase subunit 4, mitochondrial (148 aa).

The N-terminal 24 residues, 1 to 24, are a transit peptide targeting the mitochondrion; the sequence is MFALRSIRSATKAFQTTSIVSQRG.

Slime mold cytochrome c oxidase consists of at least seven different polypeptides species, subunits I, II, III, IV, V, VI, and VIIe/s in order of MW.

It localises to the mitochondrion inner membrane. The enzyme catalyses 4 Fe(II)-[cytochrome c] + O2 + 8 H(+)(in) = 4 Fe(III)-[cytochrome c] + 2 H2O + 4 H(+)(out). In terms of biological role, this protein is one of the nuclear-coded polypeptide chains of cytochrome c oxidase, the terminal oxidase in mitochondrial electron transport. The protein is Cytochrome c oxidase subunit 4, mitochondrial (cxdA) of Dictyostelium discoideum (Social amoeba).